Consider the following 633-residue polypeptide: Chitin synthase regulatory factor 4 (633 aa).

A disordered region spans residues 121–151 (ATSSQETKRDRPLPNIRNSAPSATRSHSTPC). A compositionally biased stretch (polar residues) spans 136–149 (IRNSAPSATRSHST). S148 bears the Phosphoserine mark. 5 Sel1-like repeats span residues 278–314 (AKAM…NLGY), 315–346 (TRSL…SEND), 438–474 (SSAQ…KRGE), 475–511 (TEAD…MAGN), and 512–543 (ANAQ…KAGH). A disordered region spans residues 583 to 613 (ASETSPPHAPAVSSTPVTSAPPVSQTKVTKV). The span at 592-613 (PAVSSTPVTSAPPVSQTKVTKV) shows a compositional bias: low complexity.

It is found in the cytoplasm. Its function is as follows. Involved in septum formation. Required for the proper localization of chs2 at the septum. The chain is Chitin synthase regulatory factor 4 (chr4) from Schizosaccharomyces pombe (strain 972 / ATCC 24843) (Fission yeast).